The primary structure comprises 102 residues: Small ribosomal subunit protein uS10 (102 aa).

This sequence belongs to the universal ribosomal protein uS10 family. In terms of assembly, part of the 30S ribosomal subunit.

In terms of biological role, involved in the binding of tRNA to the ribosomes. This chain is Small ribosomal subunit protein uS10, found in Allorhizobium ampelinum (strain ATCC BAA-846 / DSM 112012 / S4) (Agrobacterium vitis (strain S4)).